The sequence spans 160 residues: Putative antiporter subunit mnhE2 (160 aa).

The next 3 membrane-spanning stretches (helical) occupy residues 22–42, 55–75, and 100–120; these read HFKF…IYIL, IWVA…SSIS, and SDWS…STVI.

Belongs to the CPA3 antiporters (TC 2.A.63) subunit E family. As to quaternary structure, may form a heterooligomeric complex that consists of seven subunits: mnhA2, mnhB2, mnhC2, mnhD2, mnhE2, mnhF2 and mnhG2.

The protein localises to the cell membrane. This is Putative antiporter subunit mnhE2 (mnhE2) from Staphylococcus aureus (strain USA300).